The sequence spans 523 residues: Thiamine pathway transporter THI73 (523 aa).

The Cytoplasmic portion of the chain corresponds to Met-1–Asp-79. A helical transmembrane segment spans residues Leu-80–Leu-100. The Extracellular segment spans residues Asn-101–Ser-118. A helical transmembrane segment spans residues Asn-119–Ile-139. The Cytoplasmic portion of the chain corresponds to Gln-140–Lys-141. Residues Phe-142–His-162 traverse the membrane as a helical segment. Topologically, residues Ala-163–Thr-176 are extracellular. A helical transmembrane segment spans residues Leu-177–Tyr-197. Over Thr-198 to Gly-207 the chain is Cytoplasmic. The helical transmembrane segment at Phe-208–Leu-228 threads the bilayer. The Extracellular portion of the chain corresponds to His-229 to Gln-239. The helical transmembrane segment at Ile-240 to Leu-260 threads the bilayer. Residues Pro-261–Met-312 lie on the Cytoplasmic side of the membrane. The chain crosses the membrane as a helical span at residues Leu-313 to Ile-333. The Extracellular segment spans residues Thr-334–Ala-345. A helical transmembrane segment spans residues Leu-346–Leu-366. Topologically, residues Ser-367–His-371 are cytoplasmic. A helical transmembrane segment spans residues Ile-372–Ser-392. Topologically, residues Leu-393–Gly-400 are extracellular. Residues Asn-401–Trp-421 traverse the membrane as a helical segment. Residues Asn-422 to Arg-432 are Cytoplasmic-facing. A helical transmembrane segment spans residues Val-433–Gln-452. Over Met-453 to Lys-466 the chain is Extracellular. The helical transmembrane segment at Ile-467 to Cys-487 threads the bilayer. The Cytoplasmic segment spans residues Lys-488–Tyr-523.

It belongs to the major facilitator superfamily. Allantoate permease family.

It localises to the endoplasmic reticulum membrane. It is found in the cell membrane. Functionally, transports either thiamine or, rather, a related metabolite involved in the thiamine biosynthesis pathway. This chain is Thiamine pathway transporter THI73 (THI73), found in Saccharomyces cerevisiae (strain ATCC 204508 / S288c) (Baker's yeast).